We begin with the raw amino-acid sequence, 204 residues long: MKIGLLGTKLGMTQIFDDNGSAIPVTILKVGPCYVTNLKSDTKDNYNAIQIGYQQVDAKKLTKPQLGHLQVNNLPPLKHLKEYKVDATHTFTIAQQLDVSIFELGQIVSVSGVSIGKGFAGTVKRHNFTRGPMTHGSKNHREPGSIGQGSTPAKVHKGKKMAGRLGGHQVTTKNLTVVHLDKDNNVLVLKGCVPGKRGNILSIK.

The interval His-126–Val-155 is disordered.

This sequence belongs to the universal ribosomal protein uL3 family. As to quaternary structure, part of the 50S ribosomal subunit.

It localises to the plastid. Its subcellular location is the chloroplast. One of the primary rRNA binding proteins, it binds directly near the 3'-end of the 23S rRNA, where it nucleates assembly of the 50S subunit. The chain is Large ribosomal subunit protein uL3c (rpl3) from Guillardia theta (Cryptophyte).